Consider the following 886-residue polypeptide: Cytosolic carboxypeptidase-like protein 5 (886 aa).

Residues Y157–A570 form the Peptidase M14 domain. Zn(2+)-binding residues include H252 and E255. The segment covering S344 to S354 has biased composition (low complexity). The tract at residues S344–D364 is disordered. Position 434 (H434) interacts with Zn(2+). The active-site Proton donor/acceptor is E516. Disordered stretches follow at residues S605–K734 and L784–I848. A compositionally biased stretch (polar residues) spans C631–R640. Residues S641 to S666 show a composition bias toward low complexity. The span at R696–R705 shows a compositional bias: basic and acidic residues. Residues P714–S732 are compositionally biased toward low complexity. Residue S841 is modified to Phosphoserine.

It belongs to the peptidase M14 family. Requires Zn(2+) as cofactor. Expressed in brain.

It is found in the cytoplasm. The protein localises to the cytosol. It localises to the nucleus. The protein resides in the cytoskeleton. Its subcellular location is the spindle. It is found in the midbody. The enzyme catalyses gamma-L-glutamyl-L-glutamyl-[protein] + H2O = L-glutamyl-[protein] + L-glutamate. The catalysed reaction is (L-glutamyl)(n+1)-gamma-L-glutamyl-L-glutamyl-[protein] + H2O = (L-glutamyl)(n)-gamma-L-glutamyl-L-glutamyl-[protein] + L-glutamate. It catalyses the reaction C-terminal L-alpha-aminoacyl-L-glutamyl-[tubulin] + H2O = C-terminal L-alpha-aminoacyl-[tubulin] + L-glutamate. It carries out the reaction C-terminal L-alpha-aminoacyl-L-glutamyl-L-glutamyl-[tubulin] + H2O = C-terminal L-alpha-aminoacyl-L-glutamyl-[tubulin] + L-glutamate. In terms of biological role, metallocarboxypeptidase that mediates deglutamylation of tubulin and non-tubulin target proteins. Catalyzes the removal of polyglutamate side chains present on the gamma-carboxyl group of glutamate residues within the C-terminal tail of alpha- and beta-tubulin. Cleaves alpha- and gamma-linked polyglutamate tubulin side-chain, as well as the branching point glutamate. Also catalyzes the removal of alpha-linked glutamate residues from the carboxy-terminus of alpha-tubulin. Mediates deglutamylation of nucleotidyltransferase CGAS, leading to CGAS antiviral defense response activation. The sequence is that of Cytosolic carboxypeptidase-like protein 5 from Homo sapiens (Human).